The following is a 132-amino-acid chain: Small ribosomal subunit protein uS8 (132 aa).

The protein belongs to the universal ribosomal protein uS8 family. As to quaternary structure, part of the 30S ribosomal subunit. Contacts proteins S5 and S12.

One of the primary rRNA binding proteins, it binds directly to 16S rRNA central domain where it helps coordinate assembly of the platform of the 30S subunit. This Rhizobium johnstonii (strain DSM 114642 / LMG 32736 / 3841) (Rhizobium leguminosarum bv. viciae) protein is Small ribosomal subunit protein uS8.